The chain runs to 731 residues: Radial spoke head 10 homolog B (731 aa).

The tract at residues 1 to 69 (MARGDNMKSS…PNENQPIGEH (69 aa)) is disordered. Residues 7–17 (MKSSNKSTPEP) show a composition bias toward polar residues. Low complexity-rich tracts occupy residues 18-36 (TLSK…SESV) and 46-57 (SSSAVCSASTVS). MORN repeat units lie at residues 86 to 108 (YEGE…GGHV), 109 to 131 (YKGS…DGLK), 132 to 154 (YQGD…NGST), 155 to 177 (YEGE…KTLT), 179 to 201 (YRGQ…QEAT), 204 to 226 (YKGE…SGNV), 227 to 249 (YEGQ…DLDQ), 251 to 273 (YSGQ…RKRA), 284 to 306 (YTGD…SGAL), and 307 to 329 (YCGQ…NGRV). Disordered regions lie at residues 353 to 377 (TTPF…SPLG) and 709 to 731 (KQEQ…TSIH). Low complexity predominate over residues 363 to 377 (SKGASQSSSNASPLG). Residues 722-731 (VTTTSVTSIH) are compositionally biased toward polar residues.

The protein resides in the cytoplasm. Its subcellular location is the cytoskeleton. It localises to the cilium axoneme. It is found in the cell projection. The protein localises to the cilium. The protein resides in the flagellum. Functionally, may function as part of axonemal radial spoke complexes. Radial spoke complexes are important for ciliary motility. This is Radial spoke head 10 homolog B (rsph10b) from Danio rerio (Zebrafish).